We begin with the raw amino-acid sequence, 689 residues long: MTRKQRALFEPALVRTALIDALKKLDPRTQWRNPVMFVVYIGSILTTAIWLAILAKQTDGSAAFTGSIAMWLWFTVLFANFAEALAEGRSKAQAESLRGTKKTSWAKKLAGPRREGATEKVSAESLRKGDVVLVEAGDTIPCDGEVLEGGASVDESAITGESAPVIRESGGDFSSVTGGTRVLSDWLVVQCSVNPGETFLDRMIAMVEGAKRRKTPNEVALTILLVALTLVFVLATATLFPFSQYSVDAANGGSVVSITVLVALLVCLIPTTIGGLLSAIGVAGMSRMLGANVIATSGRAVEAAGDVDVLLLDKTGTITLGNRQASEFLPAPGVKEQELADAAQLSSLADETPEGRSIVVLAKQRFNLRERDLQALNATFVPFSAQTRMSGVNVQDRMIRKGAVDAIRRHVESNQGHFPQAVDDLVASVARTGGTPLVVAEGPRVLGVVALKDIVKGGIKERFVELRKMGIKTVMITGDNPLTAAAIAAEAGVDDFLSEATPEAKLALIRQYQAEGRLVAMTGDGTNDAPALAQADVAVAMNSGTQAAKEAGNMVDLDSNPTKLIEVVHIGKQMLMTRGSLTTFSIANDVAKYFAIIPAAFAATYPQLNALNVMHLHSPASAIMSAVIFNALVIVFLIPLALKGVSYKPMSAAALLRRNLWLYGVGGLLVPFVGIKLIDLLLVALHIAG.

Helical transmembrane passes span 35 to 55 (VMFV…AILA), 62 to 82 (AAFT…ANFA), 220 to 240 (ALTI…ATLF), and 260 to 280 (VLVA…LSAI). Asp313 acts as the 4-aspartylphosphate intermediate in catalysis. Residues Asp350, Glu354, 383 to 390 (FSAQTRMS), and Lys401 each bind ATP. Residues Asp524 and Asp528 each coordinate Mg(2+). 3 helical membrane-spanning segments follow: residues 594–614 (FAII…LNVM), 622–642 (AIMS…PLAL), and 665–685 (VGGL…LVAL).

The protein belongs to the cation transport ATPase (P-type) (TC 3.A.3) family. Type IA subfamily. In terms of assembly, the system is composed of three essential subunits: KdpA, KdpB and KdpC.

The protein resides in the cell inner membrane. It carries out the reaction K(+)(out) + ATP + H2O = K(+)(in) + ADP + phosphate + H(+). Functionally, part of the high-affinity ATP-driven potassium transport (or Kdp) system, which catalyzes the hydrolysis of ATP coupled with the electrogenic transport of potassium into the cytoplasm. This subunit is responsible for energy coupling to the transport system and for the release of the potassium ions to the cytoplasm. The polypeptide is Potassium-transporting ATPase ATP-binding subunit (Serratia proteamaculans (strain 568)).